Consider the following 466-residue polypeptide: Oryzain beta chain (466 aa).

Residues 1–21 (MAARAAAAAFLLLLIVGAATA) form the signal peptide. The propeptide at 22 to 140 (APDMSIISYN…ERYRHDGVEE (119 aa)) is activation peptide. 3 cysteine pairs are disulfide-bonded: cysteine 162–cysteine 205, cysteine 196–cysteine 238, and cysteine 296–cysteine 347. Cysteine 165 is a catalytic residue. Active-site residues include histidine 302 and asparagine 322. Asparagine 341 is a glycosylation site (N-linked (GlcNAc...) asparagine). Residues 358–380 (KSGANPPKPSPTPPTPPTPPPPS) are disordered. Residues 362–466 (NPPKPSPTPP…KRTLAKLNTA (105 aa)) constitute a propeptide, removed in mature form. Over residues 363–380 (PPKPSPTPPTPPTPPPPS) the composition is skewed to pro residues. 2 cysteine pairs are disulfide-bonded: cysteine 386–cysteine 398 and cysteine 392–cysteine 413. Asparagine 389 carries N-linked (GlcNAc...) asparagine glycosylation.

Belongs to the peptidase C1 family. As to expression, expressed only in seeds.

Functionally, probable thiol protease. In Oryza sativa subsp. japonica (Rice), this protein is Oryzain beta chain.